A 102-amino-acid polypeptide reads, in one-letter code: Acid shock protein (102 aa).

The signal sequence occupies residues 1-21 (MKKVLALVVAAAMGLSSAAFA). Low complexity predominate over residues 22–41 (AETATTPAPTATTTKAAPAK). The propeptide occupies 22–58 (AETATTPAPTATTTKAAPAKTTHHKKQHKAAPAQKAQ). The interval 22–102 (AETATTPAPT…PAKPAAQPAA (81 aa)) is disordered. Over residues 80–90 (AAKKHAKKHSH) the composition is skewed to basic residues. The span at 91 to 102 (QQPAKPAAQPAA) shows a compositional bias: low complexity.

This sequence belongs to the Asr family. Post-translationally, proteolytic processing gives rise to the active protein.

The protein resides in the periplasm. In terms of biological role, required for growth and/or survival at acidic conditions. In Escherichia coli O45:K1 (strain S88 / ExPEC), this protein is Acid shock protein.